Consider the following 431-residue polypeptide: Histidine--tRNA ligase (431 aa).

The protein belongs to the class-II aminoacyl-tRNA synthetase family. As to quaternary structure, homodimer.

It is found in the cytoplasm. It carries out the reaction tRNA(His) + L-histidine + ATP = L-histidyl-tRNA(His) + AMP + diphosphate + H(+). The sequence is that of Histidine--tRNA ligase from Neisseria meningitidis serogroup A / serotype 4A (strain DSM 15465 / Z2491).